Reading from the N-terminus, the 441-residue chain is Polycomb protein EED (441 aa).

Residues 1–72 form a disordered region; that stretch reads MSEREVSTAP…PGRKSWGKGK (72 aa). Ser2 bears the N-acetylserine mark. A phosphoserine mark is found at Ser2 and Ser34. Positions 45–61 are enriched in polar residues; it reads ESGTNTERPDTPTNTPN. Thr55 is modified (phosphothreonine). At Lys66 the chain carries N6,N6,N6-trimethyllysine; alternate. Lys66 carries the N6,N6-dimethyllysine; alternate modification. Lys66 is modified (N6-methyllysine; alternate). Residues 81-441 are interaction with EZH2; sequence SFKCVNSLKE…ASIWRWDRLR (361 aa). 4 WD repeats span residues 91–134, 142–185, 188–228, and 234–275; these read DHNQ…EIRL, DADE…CIKH, GHGN…LVAI, and GHRD…NAIK. Required for interaction with the matrix protein MA of HIV-1 regions lie at residues 149–303 and 301–441; these read TCAW…STRD and TRDI…DRLR. N6,N6,N6-trimethyllysine; alternate is present on residues Lys197, Lys268, and Lys284. An N6,N6-dimethyllysine; alternate mark is found at Lys197, Lys268, and Lys284. Residues Lys197, Lys268, and Lys284 each carry the N6-methyllysine; alternate modification. 3 WD repeats span residues 304-341, 359-399, and 408-441; these read IHRN…DDID, SQCD…PHKA, and KCGA…DRLR.

Belongs to the WD repeat ESC family. In terms of assembly, component of the PRC2/EED-EZH2 complex, which includes EED, EZH2, SUZ12, RBBP4 and RBBP7 and possibly AEBP2. The minimum components required for methyltransferase activity of the PRC2/EED-EZH2 complex are EED, EZH2 and SUZ12. Component of the PRC2/EED-EZH1 complex, which includes EED, EZH1, SUZ12, RBBP4 and AEBP2. The PRC2 complex may also interact with DNMT1, DNMT3A, DNMT3B and PHF1 via the EZH2 subunit and with SIRT1 via the SUZ12 subunit. Interacts with HDAC, HDAC2, histone H1 and YY1. May interact with ITGA4, ITGAE and ITGB7. Interacts with CDYL. Interacts with BMAL1. Interacts with KMT2A/MLL1. (Microbial infection) May interact with the MA protein of HIV-1. Methylated. Binding to histone H1 'Lys-26' promotes mono-, di-, and trimethylation of internal lysines. As to expression, expressed in brain, colon, heart, kidney, liver, lung, muscle, ovary, peripheral blood leukocytes, pancreas, placenta, prostate, spleen, small intestine, testis, thymus and uterus. Appears to be overexpressed in breast and colon cancer.

The protein resides in the nucleus. Its subcellular location is the chromosome. In terms of biological role, polycomb group (PcG) protein. Component of the PRC2/EED-EZH2 complex, which methylates 'Lys-9' and 'Lys-27' of histone H3, leading to transcriptional repression of the affected target gene. Also recognizes 'Lys-26' trimethylated histone H1 with the effect of inhibiting PRC2 complex methyltransferase activity on nucleosomal histone H3 'Lys-27', whereas H3 'Lys-27' recognition has the opposite effect, enabling the propagation of this repressive mark. The PRC2/EED-EZH2 complex may also serve as a recruiting platform for DNA methyltransferases, thereby linking two epigenetic repression systems. Genes repressed by the PRC2/EED-EZH2 complex include HOXC8, HOXA9, MYT1 and CDKN2A. This is Polycomb protein EED from Homo sapiens (Human).